We begin with the raw amino-acid sequence, 418 residues long: Acyl-coenzyme A amino acid N-acyltransferase 2 (418 aa).

Residues Ser234, Asp327, and His361 each act as charge relay system in the active site. The short motif at 416–418 (GKL) is the Microbody targeting signal element.

Belongs to the C/M/P thioester hydrolase family.

The protein resides in the peroxisome. In terms of biological role, acyltransferase which efficiently conjugates very long-chain and long-chain fatty acids to taurine. Shows no conjugation activity in the presence of glycine. The polypeptide is Acyl-coenzyme A amino acid N-acyltransferase 2 (Rattus norvegicus (Rat)).